A 96-amino-acid polypeptide reads, in one-letter code: Growth-regulated alpha protein (96 aa).

The signal sequence occupies residues 1–24 (MVSATRSLLCAALPVLATSRQATG). Disulfide bonds link C33/C59 and C35/C75.

This sequence belongs to the intercrine alpha (chemokine CxC) family. Monomer and homodimer. In terms of tissue distribution, at least expressed in the lung and trachea.

The protein resides in the secreted. Has chemotactic activity for neutrophils. Contributes to neutrophil activation during inflammation. The chain is Growth-regulated alpha protein (Cxcl1) from Rattus norvegicus (Rat).